The sequence spans 429 residues: Enolase (429 aa).

Residue Q163 coordinates (2R)-2-phosphoglycerate. The active-site Proton donor is the E205. Residues D242, E285, and D312 each contribute to the Mg(2+) site. Residues K337, R366, S367, and K388 each coordinate (2R)-2-phosphoglycerate. The active-site Proton acceptor is K337.

The protein belongs to the enolase family. Mg(2+) serves as cofactor.

It localises to the cytoplasm. The protein localises to the secreted. It is found in the cell surface. It catalyses the reaction (2R)-2-phosphoglycerate = phosphoenolpyruvate + H2O. Its pathway is carbohydrate degradation; glycolysis; pyruvate from D-glyceraldehyde 3-phosphate: step 4/5. Catalyzes the reversible conversion of 2-phosphoglycerate (2-PG) into phosphoenolpyruvate (PEP). It is essential for the degradation of carbohydrates via glycolysis. This chain is Enolase, found in Oceanobacillus iheyensis (strain DSM 14371 / CIP 107618 / JCM 11309 / KCTC 3954 / HTE831).